The sequence spans 666 residues: Probable potassium transport system protein Kup (666 aa).

Helical transmembrane passes span 16-36 (GFIIALGIVYGDIGTSPLYTM), 58-78 (ISLIIWTLTLITTIKYVLIAL), 100-120 (PWLIIPAMIGGATLLSDGALT), 141-161 (IYQNQTNVIITTLVILIVLFG), 165-185 (FGTGFIGKIFGPVMFIWFSFL), 221-241 (IFILGSIFLATTGAEALYSDL), 253-273 (WPFVKMCIVLSYCGQAAWILA), 292-312 (LTVYVVILATLAAIIASQALI), 343-363 (LYIPVINWILFAVTSCTVLYF), 373-393 (YGLAITITMLMTTILLNYYLI), 399-419 (PFLAHLVMTFFALVEFIFFWA), and 424-444 (FMHGGYVVVILALAIVFVMFI).

Belongs to the HAK/KUP transporter (TC 2.A.72) family.

It localises to the cell membrane. The catalysed reaction is K(+)(in) + H(+)(in) = K(+)(out) + H(+)(out). Functionally, transport of potassium into the cell. Likely operates as a K(+):H(+) symporter. The polypeptide is Probable potassium transport system protein Kup (Streptococcus pyogenes serotype M5 (strain Manfredo)).